A 310-amino-acid chain; its full sequence is MQKYDIKTFQGMILALQDYWAQQGCTIVQPLDMEVGAGTSHPMTCLRALGPEPMATAYVQPSRRPTDGRYGENPNRLQHYYQFQVALKPSPDNIQELYLGSLEVLGIDPLVHDIRFVEDNWENPTLGAWGLGWEIWLNGMEVTQFTYFQQVGGLECKPVTGEITYGIERLAMYIQEVGSVYDLVWNYGPQGVVTYGDIFHQNEVEQSTYNFEHADVDFLFGFFDQCEKECKELLELEKPLPLPAYERILKAGHAFNLLDARKAISVTERQRYILRIRNLTKSVAEAYYASREALGFPMCRSTKPTATEEK.

Belongs to the class-II aminoacyl-tRNA synthetase family. In terms of assembly, tetramer of two alpha and two beta subunits.

The protein localises to the cytoplasm. It catalyses the reaction tRNA(Gly) + glycine + ATP = glycyl-tRNA(Gly) + AMP + diphosphate. The protein is Glycine--tRNA ligase alpha subunit of Aliivibrio salmonicida (strain LFI1238) (Vibrio salmonicida (strain LFI1238)).